Here is a 353-residue protein sequence, read N- to C-terminus: Uroporphyrinogen decarboxylase (353 aa).

Substrate contacts are provided by residues 26-30, Asp75, Tyr161, Ser216, and His332; that span reads RQAGR.

This sequence belongs to the uroporphyrinogen decarboxylase family. In terms of assembly, homodimer.

The protein localises to the cytoplasm. It catalyses the reaction uroporphyrinogen III + 4 H(+) = coproporphyrinogen III + 4 CO2. Its pathway is porphyrin-containing compound metabolism; protoporphyrin-IX biosynthesis; coproporphyrinogen-III from 5-aminolevulinate: step 4/4. Catalyzes the decarboxylation of four acetate groups of uroporphyrinogen-III to yield coproporphyrinogen-III. The polypeptide is Uroporphyrinogen decarboxylase (Gluconacetobacter diazotrophicus (strain ATCC 49037 / DSM 5601 / CCUG 37298 / CIP 103539 / LMG 7603 / PAl5)).